A 465-amino-acid chain; its full sequence is Probable inactive receptor-like kinase BSK12 (465 aa).

Polar residues predominate over residues 1–12; sequence MGCCYSLSSTVD. Positions 1-34 are disordered; sequence MGCCYSLSSTVDPVQDHTTDASSEPRNGGGEDPP. G2 carries the N-myristoyl glycine lipid modification. 2 S-palmitoyl cysteine lipidation sites follow: C3 and C4. One can recognise a Protein kinase domain in the interval 50–291; that stretch reads FSPENIVSDQ…KEIVATLETL (242 aa). ATP is bound by residues 56–64 and K78; that span reads VSDQTSDVV.

Belongs to the protein kinase superfamily. Ser/Thr protein kinase family. Interacts with YDA. Post-translationally, diacylation-mediated membrane association is essential for BSK12 function. Expressed at the mRNA level in the sperm cells in mature pollen, but the protein is only detectable in the zygote and the micropylar endosperm upon fertilization.

It is found in the cell membrane. In terms of biological role, probable inactive protein kinase that activates the YODA MAP kinase cascade, which regulates the asymmetric first division and embryo polarity, by promoting the elongation of the zygote and the development of its basal daughter cell into the extra-embryonic suspensor. Acts as an adapter at the plasma membrane, possibly by recruiting and binding an activator. In Arabidopsis thaliana (Mouse-ear cress), this protein is Probable inactive receptor-like kinase BSK12.